The sequence spans 492 residues: E3 ubiquitin-protein ligase TRIM35 (492 aa).

N-acetylmethionine is present on Met-1. Residues Ser-4 and Ser-8 each carry the phosphoserine modification. The RING-type zinc finger occupies 21 to 61; that stretch reads CAVCYDPFRDAVTLRCGHNFCRGCVSRCWEVQVSPTCPVCK. The B box-type zinc-finger motif lies at 96–137; that stretch reads RFSRVCRLHRGQLSLFCLEDKELLCCSCQADPRHQGHRVQPV. 4 residues coordinate Zn(2+): Cys-101, His-104, Cys-123, and His-129. Residues 210-249 are a coiled coil; it reads AEETRQKQLLADEKMKQLTEETEVLAHEIERLQMEMKEDD. In terms of domain architecture, B30.2/SPRY spans 283–486; sequence YLGSLQYRVW…LRICPLHISV (204 aa).

In terms of assembly, interacts with PKM isoform M2, but not isoform M1; this interaction may compete with that between PKM and FGFR1, and hence reduces FGFR1-dependent tyrosine phosphorylation of PKM. Interacts with IRF7; this interaction promotes IRF7 proteasomal degradation. Interacts with TRAF3; this interaction promotes TRAF3 activation.

It localises to the cytoplasm. The protein localises to the nucleus. It carries out the reaction S-ubiquitinyl-[E2 ubiquitin-conjugating enzyme]-L-cysteine + [acceptor protein]-L-lysine = [E2 ubiquitin-conjugating enzyme]-L-cysteine + N(6)-ubiquitinyl-[acceptor protein]-L-lysine.. Its pathway is protein modification; protein ubiquitination. Its function is as follows. E3 ubiquitin-protein ligase that participates in multiple biological processes including cell death, glucose metabolism, and in particular, the innate immune response. Mediates 'Lys-63'-linked polyubiquitination of TRAF3 thereby promoting type I interferon production via RIG-I signaling pathway. Can also catalyze 'Lys-48'-linked polyubiquitination and proteasomal degradation of viral proteins such as influenza virus PB2. Acts as a negative feedback regulator of TLR7- and TLR9-triggered signaling. Mechanistically, promotes the 'Lys-48'-linked ubiquitination of IRF7 and induces its degradation via a proteasome-dependent pathway. Reduces FGFR1-dependent tyrosine phosphorylation of PKM, inhibiting PKM-dependent lactate production, glucose metabolism, and cell growth. In Pongo abelii (Sumatran orangutan), this protein is E3 ubiquitin-protein ligase TRIM35 (TRIM35).